The primary structure comprises 501 residues: Pyruvate kinase (501 aa).

Position 50 (R50) interacts with substrate. K(+) is bound by residues N52, S54, D85, and T86. Position 52–55 (52–55) interacts with ATP; it reads NFSH. R92 and K178 together coordinate ATP. Mg(2+) is bound at residue E243. Substrate-binding residues include G266, D267, and T299. Residue D267 participates in Mg(2+) binding.

This sequence belongs to the pyruvate kinase family. In terms of assembly, homotetramer. Mg(2+) is required as a cofactor. It depends on K(+) as a cofactor.

The enzyme catalyses pyruvate + ATP = phosphoenolpyruvate + ADP + H(+). The protein operates within carbohydrate degradation; glycolysis; pyruvate from D-glyceraldehyde 3-phosphate: step 5/5. The protein is Pyruvate kinase (PYK1) of Lachancea kluyveri (strain ATCC 58438 / CBS 3082 / BCRC 21498 / NBRC 1685 / JCM 7257 / NCYC 543 / NRRL Y-12651) (Yeast).